Here is a 444-residue protein sequence, read N- to C-terminus: Na(+)-translocating NADH-quinone reductase subunit A (444 aa).

It belongs to the NqrA family. In terms of assembly, composed of six subunits; NqrA, NqrB, NqrC, NqrD, NqrE and NqrF.

It catalyses the reaction a ubiquinone + n Na(+)(in) + NADH + H(+) = a ubiquinol + n Na(+)(out) + NAD(+). Functionally, NQR complex catalyzes the reduction of ubiquinone-1 to ubiquinol by two successive reactions, coupled with the transport of Na(+) ions from the cytoplasm to the periplasm. NqrA to NqrE are probably involved in the second step, the conversion of ubisemiquinone to ubiquinol. This is Na(+)-translocating NADH-quinone reductase subunit A from Shewanella denitrificans (strain OS217 / ATCC BAA-1090 / DSM 15013).